A 331-amino-acid chain; its full sequence is Peroxisomal nicotinamide adenine dinucleotide carrier (331 aa).

Solcar repeat units follow at residues 2 to 91 (SDAL…FRNR), 109 to 216 (VGMF…MLTK), and 229 to 320 (VTAL…LVKG). 6 consecutive transmembrane segments (helical) span residues 5–25 (LING…TYPL), 63–85 (LYGG…YYFY), 116–136 (LVAA…WVIV), 180–200 (VYDE…LIMV), 235–255 (FLLG…LLVV), and 293–313 (YKGM…LFMI).

This sequence belongs to the mitochondrial carrier (TC 2.A.29) family. In terms of assembly, homodimer. In terms of tissue distribution, expressed in cotyledons, hypocotyls, vascular tissues, trichomes, hydathodes, seeds, pedicels, flowers and stigma.

It localises to the glyoxysome membrane. Inhibited by pyridoxal 5'-phosphate, bathophenanthroline, tannic acid, mersalyl, mercuric chloride and bromocresol purple. Mediates the NAD(+) import into peroxisomes. Favors the NAD(+)(in)/AMP(out) antiport exchange, but is also able to catalyze a low unidirectional transport that might be essential under special conditions. Transports CoA, dephospho-CoA, acetyl-CoA, adenosine 3',5'-diphosphate (PAP), NAD(+), AMP, ADP and NADH, but has no activity with ATP, GTP, GDP, NADPH, NADP(+) or FAD. Required for peroxisomes proliferation. The sequence is that of Peroxisomal nicotinamide adenine dinucleotide carrier (PXN) from Arabidopsis thaliana (Mouse-ear cress).